Reading from the N-terminus, the 157-residue chain is 3-dehydroquinate dehydratase (157 aa).

Catalysis depends on Y24, which acts as the Proton acceptor. Substrate is bound by residues N75, H81, and D88. H101 (proton donor) is an active-site residue. Substrate contacts are provided by residues 102 to 103 (LS) and R112.

It belongs to the type-II 3-dehydroquinase family. In terms of assembly, homododecamer.

It carries out the reaction 3-dehydroquinate = 3-dehydroshikimate + H2O. It participates in metabolic intermediate biosynthesis; chorismate biosynthesis; chorismate from D-erythrose 4-phosphate and phosphoenolpyruvate: step 3/7. Functionally, catalyzes a trans-dehydration via an enolate intermediate. The sequence is that of 3-dehydroquinate dehydratase from Brucella abortus (strain S19).